The sequence spans 87 residues: UPF0250 protein BUAPTUC7_482 (87 aa).

This sequence belongs to the UPF0250 family.

This Buchnera aphidicola subsp. Acyrthosiphon pisum (strain Tuc7) protein is UPF0250 protein BUAPTUC7_482.